Consider the following 276-residue polypeptide: uncharacterized protein (276 aa).

The N-terminal stretch at 1-16 (MELGLILMFASAFVSA) is a signal peptide. A glycan (N-linked (GlcNAc...) asparagine) is linked at N265.

This is an uncharacterized protein from Encephalitozoon cuniculi (strain GB-M1) (Microsporidian parasite).